Reading from the N-terminus, the 352-residue chain is MINRVKTKQIFVGNVAVGGDSPISVQSMTFSKTSDVFSTVEQIKRLHFAGCDIVRVAVPEMEDALALRAIKEQISLPLVADIHFNYRLALIAAEVVDCIRINPGNIGSRERVKEVVKACQERNIPIRIGVNAGSLEKEFLNKYGQTSEGMVASAEYNIKFLEDLGFDDIKISLKASDVQRTVDAYRMLRPKNNYPFHLGVTEAGTLFHATVKSSIGLGALLLDGIGDTMRVSITGELEEEINVARAILKDSGAAKDGLNIISCPTCGRIEADLVSAVGEIERRTTHIKAPLNVSVMGCVVNAIGEAAHADIAIAYGKGKGLVMVKGEVVANLDEHELVDRFVQEVEKMAKEF.

4 residues coordinate [4Fe-4S] cluster: Cys263, Cys266, Cys298, and Glu305.

Belongs to the IspG family. Requires [4Fe-4S] cluster as cofactor.

It carries out the reaction (2E)-4-hydroxy-3-methylbut-2-enyl diphosphate + oxidized [flavodoxin] + H2O + 2 H(+) = 2-C-methyl-D-erythritol 2,4-cyclic diphosphate + reduced [flavodoxin]. It participates in isoprenoid biosynthesis; isopentenyl diphosphate biosynthesis via DXP pathway; isopentenyl diphosphate from 1-deoxy-D-xylulose 5-phosphate: step 5/6. Functionally, converts 2C-methyl-D-erythritol 2,4-cyclodiphosphate (ME-2,4cPP) into 1-hydroxy-2-methyl-2-(E)-butenyl 4-diphosphate. The polypeptide is 4-hydroxy-3-methylbut-2-en-1-yl diphosphate synthase (flavodoxin) (Sulfurimonas denitrificans (strain ATCC 33889 / DSM 1251) (Thiomicrospira denitrificans (strain ATCC 33889 / DSM 1251))).